Consider the following 156-residue polypeptide: Small ribosomal subunit protein uS7 (156 aa).

It belongs to the universal ribosomal protein uS7 family. Part of the 30S ribosomal subunit. Contacts proteins S9 and S11.

In terms of biological role, one of the primary rRNA binding proteins, it binds directly to 16S rRNA where it nucleates assembly of the head domain of the 30S subunit. Is located at the subunit interface close to the decoding center, probably blocks exit of the E-site tRNA. The chain is Small ribosomal subunit protein uS7 from Nitratidesulfovibrio vulgaris (strain DSM 19637 / Miyazaki F) (Desulfovibrio vulgaris).